Here is a 57-residue protein sequence, read N- to C-terminus: UPF0391 membrane protein XOO1885 (57 aa).

Helical transmembrane passes span Trp4–Ala24 and Phe33–Ala53.

This sequence belongs to the UPF0391 family.

The protein resides in the cell membrane. This is UPF0391 membrane protein XOO1885 from Xanthomonas oryzae pv. oryzae (strain KACC10331 / KXO85).